The following is a 130-amino-acid chain: Inner membrane protein YqjF (130 aa).

Topologically, residues 1-5 (MKKLE) are cytoplasmic. A helical transmembrane segment spans residues 6–26 (DVGVLVARILMPILFITAGWG). At 27–45 (KITGYAGTQQYMEAMGVPG) the chain is on the periplasmic side. The helical transmembrane segment at 46–66 (FMLPLVILLEFGGGLAILFGF) threads the bilayer. Residues 67-70 (LTRT) lie on the Cytoplasmic side of the membrane. The helical transmembrane segment at 71–91 (TALFTAGFTLLTAFLFHSNFA) threads the bilayer. The Periplasmic segment spans residues 92-101 (EGVNSLMFMK). The helical transmembrane segment at 102–122 (NLTISGGFLLLAITGPGAYSI) threads the bilayer. Residues 123 to 130 (DRLLNKKW) are Cytoplasmic-facing.

Belongs to the DoxX family.

Its subcellular location is the cell inner membrane. The sequence is that of Inner membrane protein YqjF (yqjF) from Escherichia coli (strain K12).